A 207-amino-acid polypeptide reads, in one-letter code: Large ribosomal subunit protein uL4 (207 aa).

The interval 48-70 (KAQKTRSEVSGGGAKPWRQKGTG) is disordered.

The protein belongs to the universal ribosomal protein uL4 family. As to quaternary structure, part of the 50S ribosomal subunit.

Functionally, one of the primary rRNA binding proteins, this protein initially binds near the 5'-end of the 23S rRNA. It is important during the early stages of 50S assembly. It makes multiple contacts with different domains of the 23S rRNA in the assembled 50S subunit and ribosome. Its function is as follows. Forms part of the polypeptide exit tunnel. The polypeptide is Large ribosomal subunit protein uL4 (Francisella philomiragia subsp. philomiragia (strain ATCC 25017 / CCUG 19701 / FSC 153 / O#319-036)).